We begin with the raw amino-acid sequence, 215 residues long: RxLR effector protein PITG_00582 (215 aa).

An N-terminal signal peptide occupies residues 1 to 19 (MLPYKTLLLALGFFFTVQC). The RxLR-dEER motif lies at 39–51 (RLLRSPEKTDEER). The stretch at 81–149 (VAKQAKEMSN…QNELEKLAKQ (69 aa)) forms a coiled coil.

Belongs to the RxLR effector family.

Its subcellular location is the secreted. The protein resides in the host cell membrane. Its function is as follows. Effector that might be involved in host plant infection. This chain is RxLR effector protein PITG_00582, found in Phytophthora infestans (strain T30-4) (Potato late blight agent).